Consider the following 91-residue polypeptide: Small ribosomal subunit protein uS19 (91 aa).

The protein belongs to the universal ribosomal protein uS19 family.

In terms of biological role, protein S19 forms a complex with S13 that binds strongly to the 16S ribosomal RNA. The protein is Small ribosomal subunit protein uS19 of Halorhodospira halophila (strain DSM 244 / SL1) (Ectothiorhodospira halophila (strain DSM 244 / SL1)).